We begin with the raw amino-acid sequence, 146 residues long: Anti-sigma F factor (146 aa).

This sequence belongs to the anti-sigma-factor family.

The catalysed reaction is L-seryl-[protein] + ATP = O-phospho-L-seryl-[protein] + ADP + H(+). It carries out the reaction L-threonyl-[protein] + ATP = O-phospho-L-threonyl-[protein] + ADP + H(+). In terms of biological role, binds to sigma F and blocks its ability to form an RNA polymerase holoenzyme (E-sigma F). Phosphorylates SpoIIAA on a serine residue. This phosphorylation may enable SpoIIAA to act as an anti-anti-sigma factor that counteracts SpoIIAB and thus releases sigma F from inhibition. In Lysinibacillus sphaericus (Bacillus sphaericus), this protein is Anti-sigma F factor.